A 430-amino-acid chain; its full sequence is Small ribosomal subunit protein uS5m (430 aa).

Residues 108-128 (AGARKGRGKRTKRKRRKDLNR) form a disordered region. The segment covering 111-125 (RKGRGKRTKRKRRKD) has biased composition (basic residues). Positions 218–282 (FDTRILEVRN…NRAVHYLHYI (65 aa)) constitute an S5 DRBM domain.

It belongs to the universal ribosomal protein uS5 family. In terms of assembly, component of the mitochondrial ribosome small subunit (28S) which comprises a 12S rRNA and about 30 distinct proteins.

The protein resides in the mitochondrion. The protein is Small ribosomal subunit protein uS5m (MRPS5) of Bos taurus (Bovine).